Here is a 314-residue protein sequence, read N- to C-terminus: Glycine--tRNA ligase alpha subunit (314 aa).

Belongs to the class-II aminoacyl-tRNA synthetase family. As to quaternary structure, tetramer of two alpha and two beta subunits.

It localises to the cytoplasm. The catalysed reaction is tRNA(Gly) + glycine + ATP = glycyl-tRNA(Gly) + AMP + diphosphate. This Mesorhizobium japonicum (strain LMG 29417 / CECT 9101 / MAFF 303099) (Mesorhizobium loti (strain MAFF 303099)) protein is Glycine--tRNA ligase alpha subunit.